We begin with the raw amino-acid sequence, 235 residues long: Orotidine 5'-phosphate decarboxylase (235 aa).

Residues Asp-10, Lys-32, Asp-59–Thr-68, Thr-123, Arg-184, Gln-193, Gly-213, and Arg-214 each bind substrate. Lys-61 serves as the catalytic Proton donor.

Belongs to the OMP decarboxylase family. Type 1 subfamily. Homodimer.

It catalyses the reaction orotidine 5'-phosphate + H(+) = UMP + CO2. Its pathway is pyrimidine metabolism; UMP biosynthesis via de novo pathway; UMP from orotate: step 2/2. In terms of biological role, catalyzes the decarboxylation of orotidine 5'-monophosphate (OMP) to uridine 5'-monophosphate (UMP). In Paramagnetospirillum magneticum (strain ATCC 700264 / AMB-1) (Magnetospirillum magneticum), this protein is Orotidine 5'-phosphate decarboxylase.